A 32-amino-acid polypeptide reads, in one-letter code: Kappa-conotoxin SrXIA (32 aa).

4 disulfides stabilise this stretch: Cys-1–Cys-15, Cys-8–Cys-20, Cys-14–Cys-24, and Cys-19–Cys-28. 2 positions are modified to 4-carboxyglutamate: Glu-9 and Glu-10. Pro-32 carries the post-translational modification Proline amide.

The protein belongs to the conotoxin I2 superfamily. As to expression, expressed by the venom duct.

The protein localises to the secreted. Its function is as follows. Kappa-conotoxins bind and inhibit voltage-gated potassium channels. This toxin inhibits Kv1.2/KCNA2 and Kv1.6/KCNA6. Produces stiffening of body, limbs and tail when injected intracranially into mice. This is Kappa-conotoxin SrXIA from Conus spurius (Alphabet cone).